A 104-amino-acid chain; its full sequence is QPDFQRCPSLRCCQQLRQAVQLTHQQQGQVGPQQVRQQFQTHQRIPAICNLQPMRQAVQLAHQQQQGQVGPQQVRCCQQLRQAVQSQAAAAGQVGPQQVGHMYR.

In terms of assembly, oligomer in an unreduced state. In terms of processing, glycosylated.

Functionally, chitin-binding protein. Has antifungal activity against C.krusei, C.albicans, C.tropicalis and C.parapsilosis. Inhibits C.albicans by increasing cell membrane permeability and production of reactive oxygen species. Has no hemagglutinating activity. The protein is Chitin-binding protein 2 of Moringa oleifera (Horseradish tree).